The chain runs to 240 residues: Guanylate kinase (240 aa).

A Guanylate kinase-like domain is found at 56 to 236 (GRIFVITGPS…TLNELKSILL (181 aa)). 63 to 70 (GPSGVGKS) contributes to the ATP binding site.

Belongs to the guanylate kinase family.

It localises to the cytoplasm. It carries out the reaction GMP + ATP = GDP + ADP. Functionally, essential for recycling GMP and indirectly, cGMP. The polypeptide is Guanylate kinase (gmk) (Mycoplasma genitalium (strain ATCC 33530 / DSM 19775 / NCTC 10195 / G37) (Mycoplasmoides genitalium)).